A 103-amino-acid polypeptide reads, in one-letter code: High-potential iron-sulfur protein (103 aa).

Positions 1-28 (MSNRRLFLKSIPIMAAAGAVGMAGLARA) are cleaved as a signal peptide. Residues Cys-66, Cys-69, Cys-82, and Cys-96 each contribute to the [4Fe-4S] cluster site.

Belongs to the high-potential iron-sulfur protein (HiPIP) family. Homodimer.

The protein localises to the periplasm. Functionally, specific class of high-redox-potential 4Fe-4S ferredoxins. Functions in anaerobic electron transport in most purple and in some other photosynthetic bacteria and in at least one genus (Paracoccus) of halophilic, denitrifying bacteria. The polypeptide is High-potential iron-sulfur protein (hip) (Ralstonia nicotianae (strain ATCC BAA-1114 / GMI1000) (Ralstonia solanacearum)).